The primary structure comprises 366 residues: MSRKPCCVGEGLKKGAWTTEEDKKLISYIHDHGEGGWRDIPQKAGLKRCGKSCRLRWTNYLKPEIKRGEFSSEEEQIIIMLHASRGNKWSVIARHLPRRTDNEIKNYWNTHLKKRLMEQGIDPVTHKPLASSSNPTVDENLNSPNASSSDKQYSRSSSMPFLSRPPPSSCNMVSKVSELSSNDGTPIQGSSLSCKKRFKKSSSTSRLLNKVAAKATSIKDILSASMEGSLSATTISHASFFNGFTEQIRNEEDSSNTSLTNTLAEFDPFSPSSLYPEHEINATSDLNMDQDYDFSQFFEKFGGDNHNEENSMNDLLMSDVSQEVSSTSVDDQDNMVGNFEGWSNYLLDHTNFMYDTDSDSLEKHFI.

2 consecutive HTH myb-type domains span residues 9 to 61 (GEGL…TNYL) and 62 to 116 (KPEI…KKRL). DNA-binding regions (H-T-H motif) lie at residues 37–61 (WRDI…TNYL) and 89–112 (WSVI…NTHL). The tract at residues 124–170 (VTHKPLASSSNPTVDENLNSPNASSSDKQYSRSSSMPFLSRPPPSSC) is disordered. Residues 130–146 (ASSSNPTVDENLNSPNA) are compositionally biased toward polar residues. The span at 147–158 (SSSDKQYSRSSS) shows a compositional bias: low complexity.

In terms of assembly, can form complexes with MYC2, MYC3 or MYC4. As to expression, expressed in generative organs, mature leaves and trichomes.

It is found in the nucleus. Functionally, major regulator of short-chained aliphatic glucosinolates (GLSs) biosynthesis. Together with MYB29/HAG3 and MYB76/HAG2, promotes aliphatic glucosinolate biosynthesis but represses indolic glucosinolate biosynthesis. Prevents insect performance (e.g. lepidopteran insect Mamestra brassicae and Spodoptera exigua) by promoting glucosinolates. The sequence is that of Transcription factor MYB28 (MYB28) from Arabidopsis thaliana (Mouse-ear cress).